The sequence spans 241 residues: Endothelial protein C receptor (241 aa).

A signal peptide spans 1–20 (MLTKFLSLLLLLLLLGCAFC). Residues 21 to 213 (NSDGSQSLHM…GSQTGRSYTS (193 aa)) are Extracellular-facing. 5 N-linked (GlcNAc...) asparagine glycosylation sites follow: Asn-47, Asn-64, Asn-139, Asn-165, and Asn-175. A helical membrane pass occupies residues 214-234 (LVLGILMGCFIIAGVAVGIFL). Topologically, residues 235-241 (CTGGRRC) are cytoplasmic.

The protein resides in the membrane. Binds activated protein C. Enhances protein C activation by the thrombin-thrombomodulin complex; plays a role in the protein C pathway controlling blood coagulation. This is Endothelial protein C receptor (Procr) from Rattus norvegicus (Rat).